We begin with the raw amino-acid sequence, 529 residues long: MQQRRPVRRALLSVSDKAGIVEFAQALSARGVELLSTGGTARLLAEKGLPVTEVSDYTGFPEMMDGRVKTLHPKVHGGILGRRGQDDAIMEEHQIQPIDMVVVNLYPFAQTVAREGCSLEDAVENIDIGGPTMVRSAAKNHKDVAIVVKSSDYDAIIKEMDDNEGSLTLATRFDLAIKAFEHTAAYDSMIANYFGSMVPAYHGESKEAAGRFPRTLNLNFIKKQDMRYGENSHQQAAFYIEENVKEASVATATQVQGKALSYNNIADTDAALECVKEFAEPACVIVKHANPCGVAIGNSILDAYDRAYKTDPTSAFGGIIAFNRELDAETAQAIISRQFVEVIIAPSASEEALKITAAKQNVRVLTCGQWGERVPGLDFKRVNGGLLVQDRDLGMVGAEELRVVTKRQPTEQELRDALFCWKVAKFVKSNAIVYAKNNMTIGIGAGQMSRVYSAKIAGIKAADEGLEVKGSSMASDAFFPFRDGIDAAAAAGVTCVIQPGGSIRDDEVIAAADEHGIAMLFTDMRHFRH.

Residues 1–148 (MQQRRPVRRA…KNHKDVAIVV (148 aa)) enclose the MGS-like domain. N6-acetyllysine is present on K287.

It belongs to the PurH family.

It catalyses the reaction (6R)-10-formyltetrahydrofolate + 5-amino-1-(5-phospho-beta-D-ribosyl)imidazole-4-carboxamide = 5-formamido-1-(5-phospho-D-ribosyl)imidazole-4-carboxamide + (6S)-5,6,7,8-tetrahydrofolate. The enzyme catalyses IMP + H2O = 5-formamido-1-(5-phospho-D-ribosyl)imidazole-4-carboxamide. Its pathway is purine metabolism; IMP biosynthesis via de novo pathway; 5-formamido-1-(5-phospho-D-ribosyl)imidazole-4-carboxamide from 5-amino-1-(5-phospho-D-ribosyl)imidazole-4-carboxamide (10-formyl THF route): step 1/1. It participates in purine metabolism; IMP biosynthesis via de novo pathway; IMP from 5-formamido-1-(5-phospho-D-ribosyl)imidazole-4-carboxamide: step 1/1. The chain is Bifunctional purine biosynthesis protein PurH from Escherichia coli O157:H7.